The chain runs to 603 residues: DNA mismatch repair protein MutL (603 aa).

Residues glutamate 336–lysine 346 show a composition bias toward basic and acidic residues. Residues glutamate 336 to isoleucine 372 are disordered.

The protein belongs to the DNA mismatch repair MutL/HexB family.

Its function is as follows. This protein is involved in the repair of mismatches in DNA. It is required for dam-dependent methyl-directed DNA mismatch repair. May act as a 'molecular matchmaker', a protein that promotes the formation of a stable complex between two or more DNA-binding proteins in an ATP-dependent manner without itself being part of a final effector complex. The sequence is that of DNA mismatch repair protein MutL from Listeria innocua serovar 6a (strain ATCC BAA-680 / CLIP 11262).